We begin with the raw amino-acid sequence, 1114 residues long: M-phase phosphoprotein 9 (1114 aa).

Disordered stretches follow at residues 1–55, 106–161, 183–207, 267–301, and 410–468; these read MEDF…KTGP, RPSC…DCHV, AKEP…VVQA, TSWA…WKPP, and VLEP…STIP. The span at 24–51 shows a compositional bias: polar residues; it reads APQSLGLSLHANRSSPHLSTNGVSSFSG. The span at 106-119 shows a compositional bias: low complexity; it reads RPSCSSSSVSEQVS. Residues 149-161 are compositionally biased toward polar residues; that stretch reads QPASSTSYPDCHV. 2 stretches are compositionally biased toward polar residues: residues 267–280 and 429–446; these read TSWA…QSKQ and HNPS…TTRA. Residues 368 to 729 are required for its centrosomal localization; it reads LSQVLTLDPG…EAQVKQAEHE (362 aa). The tract at residues 382-431 is interaction with CEP97; sequence KPKEHVAGIQAHGFLHALDDRISFSPDSVLEPSLSRHSDTDSSSQASHNP. Residues 574 to 733 adopt a coiled-coil conformation; that stretch reads DRCGQLDSAL…KQAEHESMLS (160 aa). At S710 the chain carries Phosphoserine; by TTBK2. Residue K713 forms a Glycyl lysine isopeptide (Lys-Gly) (interchain with G-Cter in ubiquitin) linkage. The residue at position 717 (S717) is a Phosphoserine; by TTBK2. Disordered stretches follow at residues 727-755, 840-931, and 975-1002; these read EHES…TSDV, SWGT…GFSH, and EEKK…NGLK. Positions 730–963 are interaction with KIF24; that stretch reads SMLSLRNGAK…PVSTLQQTTA (234 aa). Polar residues predominate over residues 852–868; sequence SKLVNSRQTEPSVNTGR. Positions 881–898 are enriched in low complexity; the sequence is QTSASQRSSSLPPSSRKA. S926 is subject to Phosphoserine. Positions 975–985 are enriched in basic and acidic residues; the sequence is EEKKYSEKNSD. Positions 1040–1105 form a coiled coil; sequence RTLAETERFF…GSVRMTLKKF (66 aa).

Interacts with CCP110, CEP97 and KIF24. Post-translationally, TTBK2-mediated phosphorylation at Ser-710 and Ser-717, promotes its ubiquitination at Lys-713 leading to proteasomal degradation, loss of MPHOSPH9 facilitates the removal of the CP110-CEP97 complex from the mother centrioles, promoting the initiation of ciliogenesis. Phosphorylated in M (mitotic) phase. In terms of processing, ubiquitinated at Lys-713, leading to proteasomal degradation.

The protein localises to the cytoplasm. The protein resides in the cytoskeleton. Its subcellular location is the microtubule organizing center. It localises to the centrosome. It is found in the centriole. The protein localises to the golgi apparatus membrane. In terms of biological role, negatively regulates cilia formation by recruiting the CP110-CEP97 complex (a negative regulator of ciliogenesis) at the distal end of the mother centriole in ciliary cells. At the beginning of cilia formation, MPHOSPH9 undergoes TTBK2-mediated phosphorylation and degradation via the ubiquitin-proteasome system and removes itself and the CP110-CEP97 complex from the distal end of the mother centriole, which subsequently promotes cilia formation. The chain is M-phase phosphoprotein 9 (Mphosph9) from Mus musculus (Mouse).